The following is a 437-amino-acid chain: Enolase (437 aa).

Position 163 (Gln-163) interacts with (2R)-2-phosphoglycerate. Glu-205 serves as the catalytic Proton donor. Residues Asp-242, Glu-285, and Asp-312 each coordinate Mg(2+). Lys-337, Arg-366, Ser-367, and Lys-388 together coordinate (2R)-2-phosphoglycerate. Lys-337 serves as the catalytic Proton acceptor.

The protein belongs to the enolase family. Mg(2+) serves as cofactor.

It localises to the cytoplasm. Its subcellular location is the secreted. The protein resides in the cell surface. It carries out the reaction (2R)-2-phosphoglycerate = phosphoenolpyruvate + H2O. It functions in the pathway carbohydrate degradation; glycolysis; pyruvate from D-glyceraldehyde 3-phosphate: step 4/5. Functionally, catalyzes the reversible conversion of 2-phosphoglycerate (2-PG) into phosphoenolpyruvate (PEP). It is essential for the degradation of carbohydrates via glycolysis. The protein is Enolase of Nitratidesulfovibrio vulgaris (strain DP4) (Desulfovibrio vulgaris).